Reading from the N-terminus, the 218-residue chain is uncharacterized protein (218 aa).

Disordered regions lie at residues 30 to 71, 93 to 120, and 133 to 209; these read FSHR…RSPP, SGRG…PRPD, and MEVE…PGFP. The segment covering 43–71 has biased composition (low complexity); it reads PGAPAVVPAPVSAPRPASSPARSESRSPP. Over residues 94–110 the composition is skewed to gly residues; it reads GRGGGGGGGGGARTGGG. A compositionally biased stretch (pro residues) spans 138–148; that stretch reads PPHPPPQPQVC. The segment covering 156–171 has biased composition (gly residues); that stretch reads PGHGRAGLPEGKGPGG. Residues 191 to 209 show a composition bias toward low complexity; the sequence is RAPSPAAPRRGRLPAPGFP.

This is an uncharacterized protein from Homo sapiens (Human).